The primary structure comprises 377 residues: RCC1 domain-containing protein 1 (377 aa).

The segment at 1–172 is interaction with KDM8; it reads MAEKRHGAWF…VRQLELGAEH (172 aa). An RCC1 1 repeat occupies 6 to 57; the sequence is HGAWFGFGFCGFGQALGSGNSHHSVYSPEPLHASDDICQVSAGWSYTALVTR. Arg144 bears the (3R)-3-hydroxyarginine mark. 3 RCC1 repeats span residues 179 to 230, 232 to 289, and 319 to 372; these read AGQV…CLSE, GDIY…IAIQ, and TGEL…VYAM.

As to quaternary structure, found in a complex with KDM8. Interacts (via N-terminus) with KDM8 (via N-terminus). Post-translationally, specifically hydroxylated (with R stereochemistry) at C-3 of ARG-141 by KDM8.

The protein resides in the chromosome. Functionally, plays a role in transcriptional repression of satellite repeats, possibly by regulating H3K36 methylation levels in centromeric regions together with KDM8. Possibly together with KDM8, is involved in proper mitotic spindle organization and chromosome segregation. Plays a role in regulating alpha-tubulin deacetylation and cytoskeletal microtubule stability, thereby promoting cell migration and TGF-beta-induced epithelial to mesenchymal transition (EMT), potentially through the inhibition of KDM8. The protein is RCC1 domain-containing protein 1 (Rccd1) of Mus musculus (Mouse).